The sequence spans 496 residues: Cytochrome P450 monooxygenase ausR (496 aa).

The chain crosses the membrane as a helical span at residues 12 to 32 (IGLYILWTIPVLFVIFKLLAP). C435 is a heme binding site.

It belongs to the cytochrome P450 family. Heme serves as cofactor.

Its subcellular location is the membrane. The protein operates within secondary metabolite biosynthesis; terpenoid biosynthesis. In terms of biological role, cytochrome P450 monooxygenase; part of the gene cluster B that mediates the biosynthesis of the fungal meroterpenoid acetoxydehydroaustin. The first step of the pathway is the synthesis of 3,5-dimethylorsellinic acid by the polyketide synthase ausA. 3,5-dimethylorsellinic acid is then prenylated by the polyprenyl transferase ausN. Further epoxidation by the FAD-dependent monooxygenase ausM and cyclization by the probable terpene cyclase ausL lead to the formation of protoaustinoid A. Protoaustinoid A is then oxidized to spiro-lactone preaustinoid A3 by the combined action of the FAD-binding monooxygenases ausB and ausC, and the dioxygenase ausE. Acid-catalyzed keto-rearrangement and ring contraction of the tetraketide portion of preaustinoid A3 by ausJ lead to the formation of preaustinoid A4. The aldo-keto reductase ausK, with the help of ausH, is involved in the next step by transforming preaustinoid A4 into isoaustinone which is in turn hydroxylated by the P450 monooxygenase ausI to form austinolide. The cytochrome P450 monooxygenase ausG then modifies austinolide to austinol. Austinol is further acetylated to austin by the O-acetyltransferase ausP, which spontaneously changes to dehydroaustin. The cytochrome P450 monooxygenase then converts dehydroaustin is into 7-dehydrodehydroaustin. The hydroxylation catalyzed by ausR permits the second O-acetyltransferase ausQ to add an additional acetyl group to the molecule, leading to the formation of acetoxydehydroaustin. Due to genetic rearrangements of the clusters and the subsequent loss of some enzymes, the end product of the Penicillium brasilianum austinoid biosynthesis clusters is acetoxydehydroaustin. The chain is Cytochrome P450 monooxygenase ausR from Penicillium brasilianum.